A 771-amino-acid chain; its full sequence is Probable cation-transporting ATPase G (771 aa).

The region spanning 19–86 is the HMA domain; it reads GRMRVQATGF…AIIDAETVPA (68 aa). Residues 72 to 92 traverse the membrane as a helical segment; that stretch reads AAILSAIIDAETVPAAAVPAY. The segment at 122 to 143 is disordered; sequence DVAAQPSGETSDACCDGEDNED. 5 consecutive transmembrane segments (helical) span residues 163-183, 209-229, 330-350, 387-407, and 411-431; these read VLLTASLVAAWAYPLWPVVLG, VGVGTLMTIAALGAVALGELG, VFAGSINGLGVLQVGVTATAA, MIAAALIAGTGSVLGNPLVWI, and LVVLVAAAPCALAIAVPVTVV. Aspartate 462 functions as the 4-aspartylphosphate intermediate in the catalytic mechanism. Mg(2+) contacts are provided by aspartate 651 and aspartate 655. 2 helical membrane-spanning segments follow: residues 657-677 and 716-736; these read PALAAADLGIAMGAMGTDVAI and IITVLMPLALFGILGLAAVVL.

It belongs to the cation transport ATPase (P-type) (TC 3.A.3) family. Type IB subfamily.

It is found in the cell membrane. It catalyses the reaction ATP + H2O = ADP + phosphate + H(+). The polypeptide is Probable cation-transporting ATPase G (ctpG) (Mycobacterium bovis (strain ATCC BAA-935 / AF2122/97)).